The sequence spans 375 residues: 23S rRNA (uracil(747)-C(5))-methyltransferase RlmC (375 aa).

Residues Cys3, Cys11, Cys14, and Cys87 each coordinate [4Fe-4S] cluster. S-adenosyl-L-methionine contacts are provided by Gln212, Phe241, Glu262, and Asn307. Cys334 acts as the Nucleophile in catalysis.

Belongs to the class I-like SAM-binding methyltransferase superfamily. RNA M5U methyltransferase family. RlmC subfamily.

The enzyme catalyses uridine(747) in 23S rRNA + S-adenosyl-L-methionine = 5-methyluridine(747) in 23S rRNA + S-adenosyl-L-homocysteine + H(+). Functionally, catalyzes the formation of 5-methyl-uridine at position 747 (m5U747) in 23S rRNA. In Escherichia coli O9:H4 (strain HS), this protein is 23S rRNA (uracil(747)-C(5))-methyltransferase RlmC.